A 319-amino-acid polypeptide reads, in one-letter code: Beta-ketoacyl-[acyl-carrier-protein] synthase III (319 aa).

Catalysis depends on residues cysteine 115 and histidine 246. Residues 247–251 form an ACP-binding region; the sequence is QANLR. Asparagine 276 is an active-site residue.

The protein belongs to the thiolase-like superfamily. FabH family. Homodimer.

It localises to the cytoplasm. The catalysed reaction is malonyl-[ACP] + acetyl-CoA + H(+) = 3-oxobutanoyl-[ACP] + CO2 + CoA. It participates in lipid metabolism; fatty acid biosynthesis. In terms of biological role, catalyzes the condensation reaction of fatty acid synthesis by the addition to an acyl acceptor of two carbons from malonyl-ACP. Catalyzes the first condensation reaction which initiates fatty acid synthesis and may therefore play a role in governing the total rate of fatty acid production. Possesses both acetoacetyl-ACP synthase and acetyl transacylase activities. Its substrate specificity determines the biosynthesis of branched-chain and/or straight-chain of fatty acids. The polypeptide is Beta-ketoacyl-[acyl-carrier-protein] synthase III (Coxiella burnetii (strain RSA 493 / Nine Mile phase I)).